Consider the following 1070-residue polypeptide: Carbamoyl phosphate synthase large chain (1070 aa).

Positions 1-401 (MPKRDDIKTI…ALLKAVRSLE (401 aa)) are carboxyphosphate synthetic domain. Arg129, Arg169, Gly175, Gly176, Lys208, Ile210, Glu215, Gly241, Ile242, His243, Gln284, and Glu298 together coordinate ATP. In terms of domain architecture, ATP-grasp 1 spans 133 to 327 (RDLMNELGEP…IAKLAAKIAV (195 aa)). Mg(2+) is bound by residues Gln284, Glu298, and Asn300. The Mn(2+) site is built by Gln284, Glu298, and Asn300. The interval 402 to 546 (IGADHLLLEE…YSTYEEENES (145 aa)) is oligomerization domain. The interval 547-929 (TRSAKESVIV…ALYKGFVASG (383 aa)) is carbamoyl phosphate synthetic domain. Residues 671 to 861 (EKALGILQIP…MANVATRVIL (191 aa)) form the ATP-grasp 2 domain. Arg707, Arg746, Val748, Glu752, Gly777, Val778, His779, Ser780, Gln820, and Glu832 together coordinate ATP. Gln820, Glu832, and Asn834 together coordinate Mg(2+). Residues Gln820, Glu832, and Asn834 each contribute to the Mn(2+) site. The MGS-like domain occupies 930 to 1070 (TTMHDYGTVL…SEVKQPKARV (141 aa)). The interval 930 to 1070 (TTMHDYGTVL…SEVKQPKARV (141 aa)) is allosteric domain.

This sequence belongs to the CarB family. In terms of assembly, composed of two chains; the small (or glutamine) chain promotes the hydrolysis of glutamine to ammonia, which is used by the large (or ammonia) chain to synthesize carbamoyl phosphate. Tetramer of heterodimers (alpha,beta)4. Mg(2+) serves as cofactor. Mn(2+) is required as a cofactor.

The catalysed reaction is hydrogencarbonate + L-glutamine + 2 ATP + H2O = carbamoyl phosphate + L-glutamate + 2 ADP + phosphate + 2 H(+). It carries out the reaction hydrogencarbonate + NH4(+) + 2 ATP = carbamoyl phosphate + 2 ADP + phosphate + 2 H(+). The protein operates within amino-acid biosynthesis; L-arginine biosynthesis; carbamoyl phosphate from bicarbonate: step 1/1. Its pathway is pyrimidine metabolism; UMP biosynthesis via de novo pathway; (S)-dihydroorotate from bicarbonate: step 1/3. Its function is as follows. Large subunit of the glutamine-dependent carbamoyl phosphate synthetase (CPSase). CPSase catalyzes the formation of carbamoyl phosphate from the ammonia moiety of glutamine, carbonate, and phosphate donated by ATP, constituting the first step of 2 biosynthetic pathways, one leading to arginine and/or urea and the other to pyrimidine nucleotides. The large subunit (synthetase) binds the substrates ammonia (free or transferred from glutamine from the small subunit), hydrogencarbonate and ATP and carries out an ATP-coupled ligase reaction, activating hydrogencarbonate by forming carboxy phosphate which reacts with ammonia to form carbamoyl phosphate. The protein is Carbamoyl phosphate synthase large chain of Listeria monocytogenes serotype 4b (strain CLIP80459).